The chain runs to 519 residues: ATP synthase subunit alpha 2 (519 aa).

179–186 lines the ATP pocket; the sequence is GDRQTGKT.

Belongs to the ATPase alpha/beta chains family. F-type ATPases have 2 components, CF(1) - the catalytic core - and CF(0) - the membrane proton channel. CF(1) has five subunits: alpha(3), beta(3), gamma(1), delta(1), epsilon(1). CF(0) has three main subunits: a(1), b(2) and c(9-12). The alpha and beta chains form an alternating ring which encloses part of the gamma chain. CF(1) is attached to CF(0) by a central stalk formed by the gamma and epsilon chains, while a peripheral stalk is formed by the delta and b chains.

Its subcellular location is the cell inner membrane. The catalysed reaction is ATP + H2O + 4 H(+)(in) = ADP + phosphate + 5 H(+)(out). Functionally, produces ATP from ADP in the presence of a proton gradient across the membrane. The alpha chain is a regulatory subunit. The sequence is that of ATP synthase subunit alpha 2 from Syntrophus aciditrophicus (strain SB).